The following is a 313-amino-acid chain: Pyrimidine-specific ribonucleoside hydrolase RihB (313 aa).

Catalysis depends on Asp11, which acts as the Proton acceptor. Ca(2+)-binding residues include Asp11, Asp16, and Val124. Positions 227 and 239 each coordinate substrate. Asp240 contributes to the Ca(2+) binding site.

Belongs to the IUNH family. RihB subfamily. Homotetramer. Ca(2+) serves as cofactor.

It catalyses the reaction a pyrimidine ribonucleoside + H2O = a pyrimidine nucleobase + D-ribose. In terms of biological role, hydrolyzes cytidine or uridine to ribose and cytosine or uracil, respectively. Has a clear preference for cytidine over uridine. Strictly specific for ribonucleosides. The polypeptide is Pyrimidine-specific ribonucleoside hydrolase RihB (Escherichia coli O157:H7).